The chain runs to 407 residues: MLSMSPIIHSLLDTDLYKFTMLQVVLHQFPQTHSVYHFRCRNLDETQYPLTDILDDLNEQLDHLCTLKFKDDELQYLRSFRFIKSDFVDYLELFQLKRRFITAGIDEEGRLDIWVEGPMVQAMMFEIFVLAIVNELYFRRIRSDAVLEEGERRLQAKLALLEQYQTQHQSDEPPFLVSDFGTRRRYSFEWQKHVIAAFHHHFPNIFRGTSNVLLAKELNITPIGTMAHEFLQAFQALDVRLRDFQKAALETWVQEYRGDLGIALTDVVGMDAFLRDFDLYFAKLFDGLRHDSGDPYEWGDKAYAHYRKLKIDTKTKMLTFSDGLNLEKAWELHQYFKGRFKVSFGIGTNLTNDMGQTPLNIVLKLVECNGQSVAKISDSPGKTMTDNDTFLAYLRQVFQIAEEEPVA.

His-228 is subject to Phosphohistidine; by autocatalysis.

Belongs to the NAPRTase family. Transiently phosphorylated on a His residue during the reaction cycle. Phosphorylation strongly increases the affinity for substrates and increases the rate of nicotinate D-ribonucleotide production. Dephosphorylation regenerates the low-affinity form of the enzyme, leading to product release.

It catalyses the reaction nicotinate + 5-phospho-alpha-D-ribose 1-diphosphate + ATP + H2O = nicotinate beta-D-ribonucleotide + ADP + phosphate + diphosphate. Its pathway is cofactor biosynthesis; NAD(+) biosynthesis; nicotinate D-ribonucleotide from nicotinate: step 1/1. With respect to regulation, 100-fold more active in the presence of saturating ATP. Its function is as follows. Catalyzes the synthesis of beta-nicotinate D-ribonucleotide from nicotinate and 5-phospho-D-ribose 1-phosphate at the expense of ATP. Functions in the deamidating salvage pathway for production of NAD from nicotinamide. Displays a strict preference for nicotinate over nicotinamide substrate. This is Nicotinate phosphoribosyltransferase from Acinetobacter baylyi (strain ATCC 33305 / BD413 / ADP1).